Here is a 436-residue protein sequence, read N- to C-terminus: Proline--tRNA ligase (436 aa).

It belongs to the class-II aminoacyl-tRNA synthetase family. ProS type 2 subfamily. In terms of assembly, homodimer.

The protein localises to the cytoplasm. It carries out the reaction tRNA(Pro) + L-proline + ATP = L-prolyl-tRNA(Pro) + AMP + diphosphate. Its function is as follows. Catalyzes the attachment of proline to tRNA(Pro) in a two-step reaction: proline is first activated by ATP to form Pro-AMP and then transferred to the acceptor end of tRNA(Pro). The chain is Proline--tRNA ligase from Neorickettsia sennetsu (strain ATCC VR-367 / Miyayama) (Ehrlichia sennetsu).